We begin with the raw amino-acid sequence, 180 residues long: Large ribosomal subunit protein uL6 (180 aa).

Belongs to the universal ribosomal protein uL6 family. Part of the 50S ribosomal subunit.

In terms of biological role, this protein binds to the 23S rRNA, and is important in its secondary structure. It is located near the subunit interface in the base of the L7/L12 stalk, and near the tRNA binding site of the peptidyltransferase center. In Borrelia turicatae (strain 91E135), this protein is Large ribosomal subunit protein uL6.